A 350-amino-acid polypeptide reads, in one-letter code: Twinfilin-1 (350 aa).

An N-acetylserine modification is found at serine 2. The 138-residue stretch at 2–139 (SHQTGIQASE…SLHGYRKYLL (138 aa)) folds into the ADF-H 1 domain. 2 positions are modified to phosphoserine: serine 143 and serine 277. One can recognise an ADF-H 2 domain in the interval 175–313 (LQGVAFPISR…TADFLYDEVH (139 aa)). At tyrosine 309 the chain carries Phosphotyrosine. The interval 316–350 (QHAHKQSFAKPKGPAGKRGIRRLIRGPAEAEATTD) is disordered. Residue threonine 349 is modified to Phosphothreonine.

The protein belongs to the actin-binding proteins ADF family. Twinfilin subfamily. In terms of assembly, interacts with G-actin; ADP-actin form and capping protein (CP). May also be able to interact with TWF2 and phosphoinositides, PI(4,5)P2. When bound to PI(4,5)P2, it is down-regulated. Interacts with ACTG1. In terms of processing, phosphorylated on serine and threonine residues.

Its subcellular location is the cytoplasm. The protein localises to the cytoskeleton. Actin-binding protein involved in motile and morphological processes. Inhibits actin polymerization, likely by sequestering G-actin. By capping the barbed ends of filaments, it also regulates motility. Seems to play an important role in clathrin-mediated endocytosis and distribution of endocytic organelles. The chain is Twinfilin-1 (Twf1) from Rattus norvegicus (Rat).